The following is a 344-amino-acid chain: Histone-lysine N-methyltransferase, H3 lysine-9 specific KMT1 (344 aa).

One can recognise a Pre-SET domain in the interval 79–174; it reads SGCSCAKDSE…DCPNRVVERG (96 aa). The Zn(2+) site is built by cysteine 81, cysteine 83, cysteine 89, cysteine 94, cysteine 96, cysteine 156, cysteine 160, cysteine 162, cysteine 166, and cysteine 272. Positions 177–312 constitute an SET domain; the sequence is IPLEIFRTPD…EGEELTFDYV (136 aa). Position 311 (tyrosine 311) interacts with S-adenosyl-L-methionine. In terms of domain architecture, Post-SET spans 328–344; it reads HMTRCLCGSKKCRKFLW. Zn(2+)-binding residues include cysteine 332, cysteine 334, and cysteine 339.

Belongs to the class V-like SAM-binding methyltransferase superfamily.

It localises to the chromosome. The enzyme catalyses L-lysyl(9)-[histone H3] + 3 S-adenosyl-L-methionine = N(6),N(6),N(6)-trimethyl-L-lysyl(9)-[histone H3] + 3 S-adenosyl-L-homocysteine + 3 H(+). Histone methyltransferase that specifically trimethylates histone H3 to form H3K9me3. H3K9me3 marks chromatin regions for DNA methylation. Plays a key role in the regulation of the biosynthesis of the gamma-pyrones fusapyrone (FPY) and deoxyfusapyrone (dFPY). This Fusarium mangiferae (Mango malformation disease fungus) protein is Histone-lysine N-methyltransferase, H3 lysine-9 specific KMT1.